The chain runs to 201 residues: Small ribosomal subunit protein uS4c (201 aa).

Positions leucine 15–tyrosine 44 are disordered. Positions methionine 89–glutamine 149 constitute an S4 RNA-binding domain.

Belongs to the universal ribosomal protein uS4 family. Part of the 30S ribosomal subunit. Contacts protein S5. The interaction surface between S4 and S5 is involved in control of translational fidelity.

The protein resides in the plastid. It is found in the chloroplast. One of the primary rRNA binding proteins, it binds directly to 16S rRNA where it nucleates assembly of the body of the 30S subunit. In terms of biological role, with S5 and S12 plays an important role in translational accuracy. This chain is Small ribosomal subunit protein uS4c (rps4), found in Daucus carota (Wild carrot).